Consider the following 139-residue polypeptide: General odorant-binding protein 56a (139 aa).

A signal peptide spans 1-19 (MNSYFVIALSALFVTLAVG). Residue N23 is glycosylated (N-linked (GlcNAc...) asparagine). Cystine bridges form between C39–C71, C67–C118, and C109–C127.

It belongs to the PBP/GOBP family. Expressed in ventral pits of larvae. In adults, it is not specifically expressed in chemosensory organs. Also expressed in stalk cells at the proximal tip of the wing disk.

The protein localises to the secreted. Present in the aqueous fluid surrounding olfactory sensory dendrites and are thought to aid in the capture and transport of hydrophobic odorants into and through this fluid. This is General odorant-binding protein 56a (Obp56a) from Drosophila melanogaster (Fruit fly).